A 428-amino-acid chain; its full sequence is Gamma-glutamyl phosphate reductase (428 aa).

It belongs to the gamma-glutamyl phosphate reductase family.

The protein localises to the cytoplasm. It catalyses the reaction L-glutamate 5-semialdehyde + phosphate + NADP(+) = L-glutamyl 5-phosphate + NADPH + H(+). Its pathway is amino-acid biosynthesis; L-proline biosynthesis; L-glutamate 5-semialdehyde from L-glutamate: step 2/2. Its function is as follows. Catalyzes the NADPH-dependent reduction of L-glutamate 5-phosphate into L-glutamate 5-semialdehyde and phosphate. The product spontaneously undergoes cyclization to form 1-pyrroline-5-carboxylate. The protein is Gamma-glutamyl phosphate reductase of Afipia carboxidovorans (strain ATCC 49405 / DSM 1227 / KCTC 32145 / OM5) (Oligotropha carboxidovorans).